A 273-amino-acid polypeptide reads, in one-letter code: Multidrug-efflux transporter 2 regulator (273 aa).

The region spanning 8 to 77 (YFTTGEFSKL…LKEIKCLIKG (70 aa)) is the HTH merR-type domain. Positions 11-30 (TGEFSKLCRVKKQTLFHYDE) form a DNA-binding region, H-T-H motif.

Activates transcription of the blt gene in response to structurally dissimilar drugs. The protein is Multidrug-efflux transporter 2 regulator (bltR) of Bacillus subtilis (strain 168).